Consider the following 127-residue polypeptide: Small ribosomal subunit protein uS11 (127 aa).

It belongs to the universal ribosomal protein uS11 family. In terms of assembly, part of the 30S ribosomal subunit. Interacts with proteins S7 and S18. Binds to IF-3.

In terms of biological role, located on the platform of the 30S subunit, it bridges several disparate RNA helices of the 16S rRNA. Forms part of the Shine-Dalgarno cleft in the 70S ribosome. In Rickettsia prowazekii (strain Madrid E), this protein is Small ribosomal subunit protein uS11.